The sequence spans 78 residues: NAD(P)H-quinone oxidoreductase subunit L (78 aa).

Transmembrane regions (helical) follow at residues 10–30 and 48–68; these read LFVI…IPLG and LLIY…APFL.

This sequence belongs to the complex I NdhL subunit family. As to quaternary structure, NDH-1 can be composed of about 15 different subunits; different subcomplexes with different compositions have been identified which probably have different functions.

It localises to the cellular thylakoid membrane. The enzyme catalyses a plastoquinone + NADH + (n+1) H(+)(in) = a plastoquinol + NAD(+) + n H(+)(out). The catalysed reaction is a plastoquinone + NADPH + (n+1) H(+)(in) = a plastoquinol + NADP(+) + n H(+)(out). In terms of biological role, NDH-1 shuttles electrons from an unknown electron donor, via FMN and iron-sulfur (Fe-S) centers, to quinones in the respiratory and/or the photosynthetic chain. The immediate electron acceptor for the enzyme in this species is believed to be plastoquinone. Couples the redox reaction to proton translocation, and thus conserves the redox energy in a proton gradient. Cyanobacterial NDH-1 also plays a role in inorganic carbon-concentration. The sequence is that of NAD(P)H-quinone oxidoreductase subunit L from Prochlorococcus marinus (strain SARG / CCMP1375 / SS120).